The chain runs to 39 residues: GATIMPGTLWCGKGNSAADYLQLGVWKDTAHCCRDHDGC.

Positions 10, 12, and 14 each coordinate Ca(2+). An intrachain disulfide couples Cys11 to Cys33. His36 is a catalytic residue. Residue Asp37 coordinates Ca(2+).

It depends on Ca(2+) as a cofactor. Expressed uniformly in tentacles (at protein level).

It is found in the secreted. The protein resides in the nematocyst. It catalyses the reaction a 1,2-diacyl-sn-glycero-3-phosphocholine + H2O = a 1-acyl-sn-glycero-3-phosphocholine + a fatty acid + H(+). Inhibited by morin and p-BPB. Its function is as follows. PA2 catalyzes the calcium-dependent hydrolysis of the 2-acyl groups in 3-sn-phosphoglycerides. Induces insulin secretion in isolated rat islets under high glucose concentration conditions, but not under low glucose concentration conditions. Increases perfusion pressure, renal vascular resistance, urinary flow, glomerular filtration rate, and potassium, sodium, and chloride excretion levels in rat kidney. Does not increase perfusion pressure in the rat mesenteric vascular bed. This Bunodosoma caissarum (Sea anemone) protein is Phospholipase A2.